A 283-amino-acid polypeptide reads, in one-letter code: Thymidylate synthase (283 aa).

Position 22 (Arg-22) interacts with dUMP. Residue Cys-160 is the Nucleophile of the active site. Residues 180-183 (RSAD), Asn-191, and 221-223 (HIY) contribute to the dUMP site. Asp-183 serves as a coordination point for (6R)-5,10-methylene-5,6,7,8-tetrahydrofolate. Ser-282 is a (6R)-5,10-methylene-5,6,7,8-tetrahydrofolate binding site.

The protein belongs to the thymidylate synthase family. Bacterial-type ThyA subfamily. In terms of assembly, homodimer.

It localises to the cytoplasm. It catalyses the reaction dUMP + (6R)-5,10-methylene-5,6,7,8-tetrahydrofolate = 7,8-dihydrofolate + dTMP. It participates in pyrimidine metabolism; dTTP biosynthesis. In terms of biological role, catalyzes the reductive methylation of 2'-deoxyuridine-5'-monophosphate (dUMP) to 2'-deoxythymidine-5'-monophosphate (dTMP) while utilizing 5,10-methylenetetrahydrofolate (mTHF) as the methyl donor and reductant in the reaction, yielding dihydrofolate (DHF) as a by-product. This enzymatic reaction provides an intracellular de novo source of dTMP, an essential precursor for DNA biosynthesis. This chain is Thymidylate synthase, found in Glaesserella parasuis serovar 5 (strain SH0165) (Haemophilus parasuis).